A 633-amino-acid polypeptide reads, in one-letter code: Probable potassium transport system protein Kup (633 aa).

The next 12 helical transmembrane spans lie at 21–41 (LAVG…LYAF), 61–81 (LVSL…VLFL), 107–127 (TAVL…DAMI), 145–165 (PTLS…LFAI), 176–196 (FFGP…IMHI), 219–239 (GFLG…AEAL), 255–275 (WFVL…ALVL), 293–313 (ALLP…QAVI), 345–365 (IFLP…VLSF), 371–391 (LATA…IMAF), 402–422 (LPMA…FLGA), and 427–447 (IHDG…IMWT).

Belongs to the HAK/KUP transporter (TC 2.A.72) family.

The protein localises to the cell inner membrane. The enzyme catalyses K(+)(in) + H(+)(in) = K(+)(out) + H(+)(out). Functionally, transport of potassium into the cell. Likely operates as a K(+):H(+) symporter. The protein is Probable potassium transport system protein Kup of Rhizobium rhizogenes (strain K84 / ATCC BAA-868) (Agrobacterium radiobacter).